The sequence spans 215 residues: Histidine biosynthesis bifunctional protein HisIE (215 aa).

A phosphoribosyl-AMP cyclohydrolase region spans residues Met-1–Phe-114. Residues Leu-115–Lys-215 form a phosphoribosyl-ATP pyrophosphohydrolase region.

It in the N-terminal section; belongs to the PRA-CH family. In the C-terminal section; belongs to the PRA-PH family.

Its subcellular location is the cytoplasm. The enzyme catalyses 1-(5-phospho-beta-D-ribosyl)-ATP + H2O = 1-(5-phospho-beta-D-ribosyl)-5'-AMP + diphosphate + H(+). The catalysed reaction is 1-(5-phospho-beta-D-ribosyl)-5'-AMP + H2O = 1-(5-phospho-beta-D-ribosyl)-5-[(5-phospho-beta-D-ribosylamino)methylideneamino]imidazole-4-carboxamide. The protein operates within amino-acid biosynthesis; L-histidine biosynthesis; L-histidine from 5-phospho-alpha-D-ribose 1-diphosphate: step 2/9. It functions in the pathway amino-acid biosynthesis; L-histidine biosynthesis; L-histidine from 5-phospho-alpha-D-ribose 1-diphosphate: step 3/9. The protein is Histidine biosynthesis bifunctional protein HisIE (hisI) of Buchnera aphidicola subsp. Acyrthosiphon pisum (strain APS) (Acyrthosiphon pisum symbiotic bacterium).